Here is a 121-residue protein sequence, read N- to C-terminus: Small ribosomal subunit protein uS13 (121 aa).

Positions 91–121 (HRRGLPVRGQNTKNNARTRKGPRKTVANKKK) are disordered. The span at 106 to 121 (ARTRKGPRKTVANKKK) shows a compositional bias: basic residues.

This sequence belongs to the universal ribosomal protein uS13 family. As to quaternary structure, part of the 30S ribosomal subunit. Forms a loose heterodimer with protein S19. Forms two bridges to the 50S subunit in the 70S ribosome.

Its function is as follows. Located at the top of the head of the 30S subunit, it contacts several helices of the 16S rRNA. In the 70S ribosome it contacts the 23S rRNA (bridge B1a) and protein L5 of the 50S subunit (bridge B1b), connecting the 2 subunits; these bridges are implicated in subunit movement. Contacts the tRNAs in the A and P-sites. This chain is Small ribosomal subunit protein uS13, found in Lysinibacillus sphaericus (strain C3-41).